The sequence spans 388 residues: RNA binding motif protein, X-linked-like-1 (388 aa).

In terms of domain architecture, RRM spans 8 to 86; the sequence is GKLFIGGLNT…KAIKVEQATK (79 aa). Positions 61-80 are enriched in basic and acidic residues; the sequence is DAKDVARDMNGKSLDGKAIK. The tract at residues 61–388 is disordered; it reads DAKDVARDMN…SDRGGGQKQI (328 aa). A Glycyl lysine isopeptide (Lys-Gly) (interchain with G-Cter in SUMO2) cross-link involves residue K80. S88 carries the post-translational modification Phosphoserine. Positions 148 to 161 are enriched in pro residues; that stretch reads RGPPPRSGGPPPKR. Basic and acidic residues-rich tracts occupy residues 191 to 212 and 238 to 271; these read PRREPLPSRRDVYLSPRDDGYS and YTYRDYSHSSSRDDYPSRGYGDRDGYGRDREYSD. The segment covering 320–332 has biased composition (low complexity); the sequence is SRDSYSSSRSDLY. Composition is skewed to basic and acidic residues over residues 333 to 344 and 377 to 388; these read SSDRDRVGRQER and SRSDRGGGQKQI.

Its subcellular location is the nucleus. Functionally, RNA-binding protein which may be involved in pre-mRNA splicing. This is RNA binding motif protein, X-linked-like-1 (Rbmxl1) from Rattus norvegicus (Rat).